Here is a 356-residue protein sequence, read N- to C-terminus: MTAEPTVAARPQQIDALRTLIRLGSLHTPMVVRTAATLRLVDHILAGARTVKALAARTDTRPEALLRLIRHLVAIGLLEEDAPGEFAPTEVGKLLADDHPAAQRAWHDLTQAVARADISFTRLPEAIRSGRPTYESVYGKPFYEDLAGRPDLRASFDSLLACDQDVAFDAPAAAHDWTNVRHVLDVGGGKGGFAAAIARRAPHVSATVLEMAGTVDTARSYLRDAGLSDRVDVVEGDFFEPLPRRADAIILSFVLLNWPDHDAVRILTRCAEALEPGGRILIHERDDLHENSFNEQFTELDLRMLVFLGGALRTREKWDGLAASAGLVVEEVRQLPSPTIPYDLSLLVLAPASTGA.

Arg153 contacts S-adenosyl-L-methionine. Asp163 is a binding site for substrate. S-adenosyl-L-methionine contacts are provided by residues Gly187, Glu210, 237–238 (DF), and Ser252. 2 residues coordinate substrate: Asn257 and Arg303.

It belongs to the class I-like SAM-binding methyltransferase superfamily. Cation-independent O-methyltransferase family. Homodimer and homotetramer in equilibrium.

The enzyme catalyses carminomycin + S-adenosyl-L-methionine = daunorubicin + S-adenosyl-L-homocysteine + H(+). It participates in antibiotic biosynthesis; daunorubicin biosynthesis. Its pathway is antibiotic biosynthesis; carminomycin biosynthesis. With respect to regulation, strongly inhibited by S-adenosyl-L-homocysteine and weakly by adenine and methionine. In terms of biological role, involved in the biosynthesis of the anthracyclines carminomycin and daunorubicin (daunomycin) which are aromatic polyketide antibiotics that exhibit high cytotoxicity and are widely applied in the chemotherapy of a variety of cancers. In vivo, catalyzes the transfer of a methyl group from S-adenosyl-L-methionine to the 4-O-position of carminomycin to form daunorubicin. In vitro, it also methylates the anthracyclines rhodomycin D (10-carbomethoxy-13-deoxycarminomycin), 10-carboxy-13-deoxycarminomycin, 13-deoxy-carminomycin and 13-dihydrocarminomycin at the 4-hydroxyl position. The sequence is that of Carminomycin 4-O-methyltransferase DauK (dauK) from Streptomyces sp. (strain C5).